The chain runs to 59 residues: Large ribosomal subunit protein bL32 (59 aa).

Residues 1–20 are disordered; sequence MAVQQNKKSRSRKGMRRSHD. Basic residues predominate over residues 7 to 19; sequence KKSRSRKGMRRSH.

This sequence belongs to the bacterial ribosomal protein bL32 family.

This chain is Large ribosomal subunit protein bL32, found in Nitratidesulfovibrio vulgaris (strain ATCC 29579 / DSM 644 / CCUG 34227 / NCIMB 8303 / VKM B-1760 / Hildenborough) (Desulfovibrio vulgaris).